The sequence spans 835 residues: Phenylalanine--tRNA ligase beta subunit (835 aa).

Residues 44 to 160 form the tRNA-binding domain; sequence PETTGPLVFG…SYGEPGEDAR (117 aa). The B5 domain maps to 419-494; sequence PAMQPITMKV…RLEGLEAIPT (76 aa). Mg(2+)-binding residues include Asp472, Asp478, Glu481, and Glu482. The 94-residue stretch at 741–834 folds into the FDX-ACB domain; sequence SSFPALHQDI…AKEKFNAEMR (94 aa).

Belongs to the phenylalanyl-tRNA synthetase beta subunit family. Type 1 subfamily. In terms of assembly, tetramer of two alpha and two beta subunits. Mg(2+) is required as a cofactor.

The protein localises to the cytoplasm. The enzyme catalyses tRNA(Phe) + L-phenylalanine + ATP = L-phenylalanyl-tRNA(Phe) + AMP + diphosphate + H(+). The sequence is that of Phenylalanine--tRNA ligase beta subunit from Corynebacterium glutamicum (strain ATCC 13032 / DSM 20300 / JCM 1318 / BCRC 11384 / CCUG 27702 / LMG 3730 / NBRC 12168 / NCIMB 10025 / NRRL B-2784 / 534).